Reading from the N-terminus, the 100-residue chain is Osteocalcin (100 aa).

The N-terminal stretch at 1-23 is a signal peptide; sequence MRALTLLALLALAALCITGQAGA. A propeptide spanning residues 24–51 is cleaved from the precursor; sequence KPSGADSSKGAAFVSKQEGSEVVKRPRR. The region spanning 52–98 is the Gla domain; sequence YLYQWLGAPVPYPDPLEPKREVCELNPDCDELADHIGFQEAYRRFYG. Ca(2+) contacts are provided by E68, E72, E75, and D81. 4-carboxyglutamate is present on residues E68, E72, and E75. C74 and C80 form a disulfide bridge.

The protein belongs to the osteocalcin/matrix Gla protein family. In terms of processing, gamma-carboxyglutamate residues are formed by vitamin K dependent carboxylation by GGCX. These residues are essential for the binding of calcium. Decarboxylation promotes the hormone activity.

The protein resides in the secreted. Functionally, the carboxylated form is one of the main organic components of the bone matrix, which constitutes 1-2% of the total bone protein: it acts as a negative regulator of bone formation and is required to limit bone formation without impairing bone resorption or mineralization. The carboxylated form binds strongly to apatite and calcium. The uncarboxylated form acts as a hormone secreted by osteoblasts, which regulates different cellular processes, such as energy metabolism, male fertility and brain development. Regulates of energy metabolism by acting as a hormone favoring pancreatic beta-cell proliferation, insulin secretion and sensitivity and energy expenditure. Uncarboxylated osteocalcin hormone also promotes testosterone production in the testes: acts as a ligand for G protein-coupled receptor GPRC6A at the surface of Leydig cells, initiating a signaling response that promotes the expression of enzymes required for testosterone synthesis in a CREB-dependent manner. Also acts as a regulator of brain development: osteocalcin hormone crosses the blood-brain barrier and acts as a ligand for GPR158 on neurons, initiating a signaling response that prevents neuronal apoptosis in the hippocampus, favors the synthesis of all monoamine neurotransmitters and inhibits that of gamma-aminobutyric acid (GABA). Osteocalcin also crosses the placenta during pregnancy and maternal osteocalcin is required for fetal brain development. In Pongo pygmaeus (Bornean orangutan), this protein is Osteocalcin.